The sequence spans 531 residues: Pescadillo homolog (531 aa).

Positions 309 to 398 (SIKTMFKGCV…RKLPTERYMP (90 aa)) constitute a BRCT domain.

It belongs to the pescadillo family.

Its subcellular location is the nucleus. It localises to the nucleolus. It is found in the nucleoplasm. In terms of biological role, required for maturation of ribosomal RNAs and formation of the large ribosomal subunit. The chain is Pescadillo homolog from Caenorhabditis elegans.